Consider the following 642-residue polypeptide: Zinc finger protein 14 (642 aa).

Positions 4 to 76 constitute a KRAB domain; it reads VSFEDVAVNF…MVERLCESRK (73 aa). A C2H2-type 1 zinc finger spans residues 103–125; the sequence is HECSFCGRDFMHHSSLNRHMRSH. Residues 141 to 163 form a C2H2-type 2; degenerate zinc finger; sequence RKHKAVEKTFSYHHCFRKHERTH. The segment at 169–191 adopts a C2H2-type 3 zinc-finger fold; that stretch reads YECKQCGKAFIYYQPFQRHERTH. The segment at 197–217 adopts a C2H2-type 4; atypical zinc-finger fold; that stretch reads YECKQCGKTFIYYQSFQQHAH. 15 C2H2-type zinc fingers span residues 223 to 245, 251 to 273, 279 to 301, 307 to 329, 335 to 357, 363 to 385, 391 to 413, 419 to 441, 447 to 469, 475 to 497, 503 to 525, 531 to 553, 559 to 581, 587 to 609, and 615 to 637; these read YECK…ERTH, YKCK…KRTH, YECK…VITH, YKCK…ERTH, YECK…ETTH, YECK…ERSH, YECK…EKIH, FECK…ERTH, YQCK…ERTH, and YRCK…ERSH.

Belongs to the krueppel C2H2-type zinc-finger protein family.

The protein resides in the nucleus. May be involved in transcriptional regulation. The protein is Zinc finger protein 14 (ZNF14) of Pongo abelii (Sumatran orangutan).